Consider the following 340-residue polypeptide: Guanine nucleotide-binding protein G(I)/G(S)/G(T) subunit beta-3 (340 aa).

WD repeat units follow at residues 53 to 83 (GHLA…IVWD), 95 to 125 (LRSS…SIYN), 141 to 170 (AHTG…ALWD), 182 to 212 (GHTG…KLWD), 224 to 254 (GHES…RLFD), 268 to 298 (SIIC…NVWD), and 310 to 340 (GHDN…KIWN).

This sequence belongs to the WD repeat G protein beta family. G proteins are composed of 3 units, alpha, beta and gamma. Interacts with RASD2.

Functionally, guanine nucleotide-binding proteins (G proteins) are involved as a modulator or transducer in various transmembrane signaling systems. The beta and gamma chains are required for the GTPase activity, for replacement of GDP by GTP, and for G protein-effector interaction. The protein is Guanine nucleotide-binding protein G(I)/G(S)/G(T) subunit beta-3 (Gnb3) of Mus musculus (Mouse).